A 543-amino-acid polypeptide reads, in one-letter code: Periplasmic oligopeptide-binding protein OppA (543 aa).

An N-terminal signal peptide occupies residues 1–26 (MTNITKRSLVAAGVLAALMAGNVALA). Cysteine 297 and cysteine 443 are disulfide-bonded.

This sequence belongs to the bacterial solute-binding protein 5 family. In terms of assembly, the complex is composed of two ATP-binding proteins (OppD and OppF), two transmembrane proteins (OppB and OppC) and a solute-binding protein (OppA).

Its subcellular location is the periplasm. Functionally, part of the ABC transporter complex OppABCDF involved in the uptake of oligopeptides. Plays an important nutritional role. Binds peptides containing from two to five amino acid residues. Displays a preference for tripeptides and tetrapeptides over dipeptides and pentapeptides, for peptides composed of L-amino acids and for positively charged peptides. Cannot bind the cell wall peptide L-Ala-D-Gly-gamma-meso-diaminopimelic acid. The chain is Periplasmic oligopeptide-binding protein OppA from Escherichia coli (strain K12).